Reading from the N-terminus, the 103-residue chain is Protamine-2 (103 aa).

The segment at 1–103 (MVRYRMRSLS…RTRRRRCRRH (103 aa)) is disordered. Residues Ser-8 and Ser-10 each carry the phosphoserine modification. The segment covering 8-17 (SLSERPHEVH) has biased composition (basic and acidic residues). The segment covering 18-29 (GQQVHGQDQGHN) has biased composition (low complexity). Residues 48–103 (HRGHSHHRRRRCSRRRLHRIHRRRHRSCRRRRRRSCRHRRRHRRGCRTRRRRCRRH) show a composition bias toward basic residues.

This sequence belongs to the protamine P2 family. As to quaternary structure, interacts with TDRP. Post-translationally, proteolytic processing into mature chains is required for histone eviction during spermatogenesis. Transition proteins (TNP1 and TNP2) are required for processing. Testis.

Its subcellular location is the nucleus. It is found in the chromosome. Protamines substitute for histones in the chromatin of sperm during the haploid phase of spermatogenesis. They compact sperm DNA into a highly condensed, stable and inactive complex. The chain is Protamine-2 (PRM2) from Macaca nemestrina (Pig-tailed macaque).